Here is a 939-residue protein sequence, read N- to C-terminus: Translation initiation factor IF-2 (939 aa).

The segment covering 81–94 has biased composition (basic and acidic residues); that stretch reads EEQSRKAYEKEQQL. Disordered stretches follow at residues 81–303 and 316–337; these read EEQS…KKVE and TISG…KMRR. Residues 99-108 are compositionally biased toward low complexity; the sequence is SSAPSPAPAA. Composition is skewed to basic and acidic residues over residues 112–127 and 148–173; these read EPVK…RHEP and SPKE…EKAA. Low complexity predominate over residues 178–189; that stretch reads EAQPEAQSQQEP. The span at 244-255 shows a compositional bias: basic and acidic residues; sequence FKENAAELKDEF. Over residues 276–287 the composition is skewed to low complexity; sequence AAGEGESTTGGE. Residues 292–301 show a composition bias toward basic residues; it reads KKKKGKKKKK. Low complexity predominate over residues 318-328; the sequence is SGMDDSGSSGS. The region spanning 436–606 is the tr-type G domain; it reads TRPPVVTIMG…LTEAEVRELK (171 aa). The G1 stretch occupies residues 445-452; sequence GHVDHGKT. Residue 445–452 coordinates GTP; that stretch reads GHVDHGKT. Residues 470-474 are G2; the sequence is GITQH. A G3 region spans residues 492–495; the sequence is DTPG. GTP-binding positions include 492–496 and 546–549; these read DTPGH and NKID. The tract at residues 546–549 is G4; that stretch reads NKID. Residues 582–584 form a G5 region; it reads SAK.

It belongs to the TRAFAC class translation factor GTPase superfamily. Classic translation factor GTPase family. IF-2 subfamily.

It localises to the cytoplasm. In terms of biological role, one of the essential components for the initiation of protein synthesis. Protects formylmethionyl-tRNA from spontaneous hydrolysis and promotes its binding to the 30S ribosomal subunits. Also involved in the hydrolysis of GTP during the formation of the 70S ribosomal complex. This chain is Translation initiation factor IF-2, found in Chlorobaculum parvum (strain DSM 263 / NCIMB 8327) (Chlorobium vibrioforme subsp. thiosulfatophilum).